The primary structure comprises 349 residues: Peroxisomal acyl-coenzyme A thioester hydrolase 1 (349 aa).

Active-site charge relay system residues include aspartate 259, serine 282, and glutamine 333. Residues 347–349 carry the Microbody targeting signal motif; it reads AKF.

This sequence belongs to the C/M/P thioester hydrolase family.

Its subcellular location is the peroxisome. It carries out the reaction hexadecanoyl-CoA + H2O = hexadecanoate + CoA + H(+). Its function is as follows. Acyl-coenzyme A (acyl-CoA) thioesterases are a group of enzymes that catalyze the hydrolysis of acyl-CoAs to the free fatty acid and coenzyme A (CoASH), providing the potential to regulate intracellular levels of acyl-CoAs, free fatty acids and CoASH. Contributes to growth on fatty acids. The chain is Peroxisomal acyl-coenzyme A thioester hydrolase 1 (TES1) from Saccharomyces cerevisiae (strain ATCC 204508 / S288c) (Baker's yeast).